A 216-amino-acid polypeptide reads, in one-letter code: Cytidylate kinase (216 aa).

ATP is bound at residue 10–18; sequence GPAAAGKST.

Belongs to the cytidylate kinase family. Type 1 subfamily.

It is found in the cytoplasm. The catalysed reaction is CMP + ATP = CDP + ADP. It carries out the reaction dCMP + ATP = dCDP + ADP. This is Cytidylate kinase from Macrococcus caseolyticus (strain JCSC5402) (Macrococcoides caseolyticum).